We begin with the raw amino-acid sequence, 347 residues long: Spermatogenesis associated 6-like protein (347 aa).

The disordered stretch occupies residues 115–199 (SKSHGQRVQA…ENNLEHCSKK (85 aa)). Residues 116-125 (KSHGQRVQAT) show a composition bias toward polar residues. Residues 153-166 (LHLHRPTQRNHGKS) are compositionally biased toward basic residues. Positions 170 to 183 (PGERKPPFVVRHVD) are enriched in basic and acidic residues. Residues Ser-218 and Ser-221 each carry the phosphoserine modification. Residues 234–285 (ERIVLKSQPPPPVDSSESRKPSLSHQGDASLHTETSVTTSQLSRPPSPLNQP) are disordered. A compositionally biased stretch (polar residues) spans 254-277 (PSLSHQGDASLHTETSVTTSQLSR).

Belongs to the SPATA6 family.

The protein is Spermatogenesis associated 6-like protein (Spata6l) of Mus musculus (Mouse).